Consider the following 150-residue polypeptide: UPF0178 protein BceJ2315_16760 (150 aa).

This sequence belongs to the UPF0178 family.

In Burkholderia cenocepacia (strain ATCC BAA-245 / DSM 16553 / LMG 16656 / NCTC 13227 / J2315 / CF5610) (Burkholderia cepacia (strain J2315)), this protein is UPF0178 protein BceJ2315_16760.